The sequence spans 435 residues: UDP-N-acetylmuramate--L-alanine ligase (435 aa).

Residue 108 to 114 (GSHGKTS) coordinates ATP.

This sequence belongs to the MurCDEF family.

The protein resides in the cytoplasm. It catalyses the reaction UDP-N-acetyl-alpha-D-muramate + L-alanine + ATP = UDP-N-acetyl-alpha-D-muramoyl-L-alanine + ADP + phosphate + H(+). Its pathway is cell wall biogenesis; peptidoglycan biosynthesis. Functionally, cell wall formation. In Exiguobacterium sp. (strain ATCC BAA-1283 / AT1b), this protein is UDP-N-acetylmuramate--L-alanine ligase.